Here is a 529-residue protein sequence, read N- to C-terminus: MIAVFSLIAAALAVGSLVLLPVVLRGGCLLVVTIVWLWQILHFWHWRRLGVPFVPAAPFVGNVWNLLRGACCFGDQFRELYESKEAAGRAFVGIDVLHNHALLLRDPALIKRIMVEDFAQFSSRFETTDPTCDTMGSQNLFFSKYETWRETHKIFAPFFAAGKVRNMYGLLENIGQKLEEHMEQKLSGRDSMELEVKQLCALFTTDIIASLAFGIEAHSLQNPEAEFRRMCIEVNDPRPKRLLHLFTMFFFPRLSHRVGTHLYSEEYERFMRKSMDYVLSQRAESGENRHDLIDIFLQLKRTEPAESIIHRPDFFAAQAAFLLLAGFDTSSSTITFALYELAKNTTIQDRLRTELRAALQSSQDRQLSCDTVTGLVYLRQVVDEVLRLYPPTAFLDRCCNSRTGYDLSPWNGGSPFKLRAGTPVYISVLGIHRDAQYWPNPEVFDPERFSAEQRQQHHPMTYLPFGAGPRGCIGTLLGQLEIKVGLLHILNHFRVEVCERTLPEMRFDPKAFVLTAHNGTYLRFVKNSL.

C472 contacts heme.

This sequence belongs to the cytochrome P450 family. Heme is required as a cofactor.

It localises to the endoplasmic reticulum membrane. Its subcellular location is the microsome membrane. In terms of biological role, may be involved in the metabolism of insect hormones and in the breakdown of synthetic insecticides. The chain is Probable cytochrome P450 6t1 (Cyp6t1) from Drosophila melanogaster (Fruit fly).